The sequence spans 323 residues: Serine/threonine-protein phosphatase PP1-gamma catalytic subunit (323 aa).

An N-acetylalanine modification is found at alanine 2. Residues aspartate 64, histidine 66, aspartate 92, and asparagine 124 each coordinate Mn(2+). Histidine 125 serves as the catalytic Proton donor. Positions 173 and 248 each coordinate Mn(2+). A disordered region spans residues 302–323 (KKPNATRPVTPPRGMITKQAKK). Residues threonine 307 and threonine 311 each carry the phosphothreonine modification.

This sequence belongs to the PPP phosphatase family. PP-1 subfamily. In terms of assembly, PP1 comprises a catalytic subunit, PPP1CA, PPP1CB or PPP1CC, which is folded into its native form by inhibitor 2 and glycogen synthetase kinase 3, and then complexed to one or several targeting or regulatory subunits. PPP1R12A, PPP1R12B and PPP1R12C mediate binding to myosin. PPP1R3A (in skeletal muscle), PPP1R3B (in sliver), PPP1R3C, PPP1R3D and PPP1R3F (in brain) mediate binding to glycogen. PPP1R15A and PPP1R15B mediate binding to EIF2S1. Part of a complex containing PPP1R15B, PP1 and NCK1/2. Interacts with PPP1R3B, PPP1R7 and CDCA2. Isoform 2 interacts with SPZ1. Interacts with IKFZ1; the interaction targets PPP1CC to pericentromeric heterochromatin, dephosphorylates IKAROS, stabilizes it and prevents it from degradation. Interacts with NOM1 and PPP1R8. Component of the PTW/PP1 phosphatase complex, composed of PPP1R10/PNUTS, TOX4, WDR82, and PPP1CA or PPP1CB or PPP1CC. Interacts with PPP1R8. Interacts with NEK2. Interacts with URI1; the interaction is phosphorylation-dependent and occurs in a growth factor-dependent manner. Interacts with FOXP3. Interacts with TMEM225 (via RVxF motif). Interacts with MKI67. Interacts with RRP1B; this targets PPP1CC to the nucleolus. Found in a complex with PPP1CA, PPP1CC, SHC1 and PEAK1. Interacts with DYNLT4. Interacts (via RVxF motif) with FIRRM; regulates PLK1 kinase activity. Interacts with the KNL1 complex subunit KNL1; the interaction is direct and mutually exclusive with KNL1 binding to microtubules. Component of the SHOC2-MRAS-PP1c (SMP) complex consisting of SHOC2, GTP-bound M-Ras/MRAS and the catalytic subunit of protein phosphatase 1 (either PPP1CA, PPP1CB or PPP1CC). SHOC2 and PP1c preferably bind M-Ras/MRAS, but they also bind K-Ras/KRAS, N-Ras/NRAS and H-Ras/HRAS; these interactions are GTP-dependent and both SHOC2 and PP1c are required to form a stable complex. Interacts with SHOC2 in the absence of Ras GTPases. Mn(2+) is required as a cofactor. Phosphorylated by NEK2. As to expression, isoform 2 is expressed only in testis, in the late spermatocytes and early spematids (at protein level).

The protein resides in the cytoplasm. Its subcellular location is the nucleus. It localises to the cleavage furrow. The protein localises to the nucleolus. It is found in the nucleoplasm. The protein resides in the chromosome. Its subcellular location is the centromere. It localises to the kinetochore. The protein localises to the nucleus speckle. It is found in the midbody. The protein resides in the mitochondrion. Its subcellular location is the cytoskeleton. It localises to the microtubule organizing center. It carries out the reaction O-phospho-L-seryl-[protein] + H2O = L-seryl-[protein] + phosphate. The enzyme catalyses O-phospho-L-threonyl-[protein] + H2O = L-threonyl-[protein] + phosphate. With respect to regulation, inactivated by binding to URI1. Its function is as follows. Protein phosphatase that associates with over 200 regulatory proteins to form highly specific holoenzymes which dephosphorylate hundreds of biological targets. Protein phosphatase 1 (PP1) is essential for cell division, and participates in the regulation of glycogen metabolism, muscle contractility and protein synthesis. Dephosphorylates RPS6KB1. Involved in regulation of ionic conductances and long-term synaptic plasticity. May play an important role in dephosphorylating substrates such as the postsynaptic density-associated Ca(2+)/calmodulin dependent protein kinase II. Component of the PTW/PP1 phosphatase complex, which plays a role in the control of chromatin structure and cell cycle progression during the transition from mitosis into interphase. In balance with CSNK1D and CSNK1E, determines the circadian period length, through the regulation of the speed and rhythmicity of PER1 and PER2 phosphorylation. May dephosphorylate CSNK1D and CSNK1E. Regulates the recruitment of the SKA complex to kinetochores. Core component of the SHOC2-MRAS-PP1c (SMP) holophosphatase complex that regulates the MAPK pathway activation. Dephosphorylates MKI67 at the onset of anaphase. The SMP complex specifically dephosphorylates the inhibitory phosphorylation at 'Ser-259' of RAF1 kinase, 'Ser-365' of BRAF kinase and 'Ser-214' of ARAF kinase, stimulating their kinase activities. The SMP complex enhances the dephosphorylation activity and substrate specificity of PP1c. Required for normal male fertility. The chain is Serine/threonine-protein phosphatase PP1-gamma catalytic subunit (Ppp1cc) from Rattus norvegicus (Rat).